The following is a 232-amino-acid chain: Octanoyltransferase (232 aa).

A BPL/LPL catalytic domain is found at 32–219 (DTIYDTLILL…SFMVFNFSSC (188 aa)). Substrate is bound by residues 77-84 (RGGDITYH), 140-142 (AIG), and 153-155 (GFA). Residue cysteine 171 is the Acyl-thioester intermediate of the active site.

It belongs to the LipB family.

It localises to the cytoplasm. It carries out the reaction octanoyl-[ACP] + L-lysyl-[protein] = N(6)-octanoyl-L-lysyl-[protein] + holo-[ACP] + H(+). Its pathway is protein modification; protein lipoylation via endogenous pathway; protein N(6)-(lipoyl)lysine from octanoyl-[acyl-carrier-protein]: step 1/2. Catalyzes the transfer of endogenously produced octanoic acid from octanoyl-acyl-carrier-protein onto the lipoyl domains of lipoate-dependent enzymes. Lipoyl-ACP can also act as a substrate although octanoyl-ACP is likely to be the physiological substrate. In Dictyoglomus thermophilum (strain ATCC 35947 / DSM 3960 / H-6-12), this protein is Octanoyltransferase.